An 876-amino-acid polypeptide reads, in one-letter code: Valine--tRNA ligase (876 aa).

A 'HIGH' region motif is present at residues 43 to 53 (PNVTGVLHMGH). A 'KMSKS' region motif is present at residues 533-537 (KMSKS). Position 536 (Lys-536) interacts with ATP. Residues 804 to 876 (GALIDVEEEI…DSLNQLQSTK (73 aa)) are a coiled coil.

It belongs to the class-I aminoacyl-tRNA synthetase family. ValS type 1 subfamily. Monomer.

The protein localises to the cytoplasm. It catalyses the reaction tRNA(Val) + L-valine + ATP = L-valyl-tRNA(Val) + AMP + diphosphate. Catalyzes the attachment of valine to tRNA(Val). As ValRS can inadvertently accommodate and process structurally similar amino acids such as threonine, to avoid such errors, it has a 'posttransfer' editing activity that hydrolyzes mischarged Thr-tRNA(Val) in a tRNA-dependent manner. In Porphyromonas gingivalis (strain ATCC 33277 / DSM 20709 / CIP 103683 / JCM 12257 / NCTC 11834 / 2561), this protein is Valine--tRNA ligase.